We begin with the raw amino-acid sequence, 507 residues long: Cytochrome P450 monooxygenase nodZ (507 aa).

The next 2 membrane-spanning stretches (helical) occupy residues M1–L21 and G205–L225. Residue N352 is glycosylated (N-linked (GlcNAc...) asparagine). C445 contributes to the heme binding site.

It belongs to the cytochrome P450 family. Heme is required as a cofactor.

The protein resides in the membrane. Its pathway is secondary metabolite biosynthesis. Its function is as follows. Cytochrome P450 monooxygenase; part of the gene cluster that mediates the biosynthesis of the indole diterpenes nodulisporic acids (NA). Nodulisporic acid A (NAA) and its chemically modified derivatives are of particular significance because of their highly potent insecticidal activity against blood-feeding arthropods and lack of observable adverse effects on mammals, in particular the tremogenicity associated with the paspaline-derived IDTs is not observed. The geranylgeranyl diphosphate (GGPP) synthase ggs1, localized outside of the cluster, is proposed to catalyze the first step in nodulisporic acid biosynthesis via conversion of farnesyl pyrophosphate and isopentyl pyrophosphate into geranylgeranyl pyrophosphate (GGPP). Condensation of indole-3-glycerol phosphate with GGPP by the prenyl transferase nodC then forms 3-geranylgeranylindole (3-GGI). Epoxidation by the FAD-dependent monooxygenase nodM leads to a single-epoxidized-GGI that is substrate of the terpene cyclase nodB for cyclization to yield emindole SB. The terminal methyl carbon, C28, of emindole SB is then oxidized by the cytochrome P450 monooxygenase nodW to produce nodulisporic acid F (NAF), the pentacyclic core of NAA. NAF is converted to nodulisporic acid E (NAE) via prenylation. This step is probably performed by one of the indole diterpene prenyltransferases nodD1 or nodD2. Several oxidation steps performed by the FAD-linked oxidoreductase nodO and one of the cytochrome P450 monooxygenase nodR, nodX or nodZ further convert NAE to nodulisporic acid D (NAD). NAD is substrate of cytochrome P450 monooxygenase nodJ to produce the precursor of nodulisporic acid C (NAC), converted to NAC by one of the indole diterpene prenyltransferases nodD1 or nodD2. The FAD-dependent monooxygenase nodY2 then oxidizes NAC to nodulisporic acid B (NAB). Finally NAB is converted to NAA by one of the cytochrome P450 monooxygenases nodR, nodX or nodZ. The sequence is that of Cytochrome P450 monooxygenase nodZ from Hypoxylon pulicicidum.